The following is a 122-amino-acid chain: Small ribosomal subunit protein uS13 (122 aa).

The interval lysine 94–lysine 122 is disordered.

The protein belongs to the universal ribosomal protein uS13 family. Part of the 30S ribosomal subunit. Forms a loose heterodimer with protein S19. Forms two bridges to the 50S subunit in the 70S ribosome.

Its function is as follows. Located at the top of the head of the 30S subunit, it contacts several helices of the 16S rRNA. In the 70S ribosome it contacts the 23S rRNA (bridge B1a) and protein L5 of the 50S subunit (bridge B1b), connecting the 2 subunits; these bridges are implicated in subunit movement. Contacts the tRNAs in the A and P-sites. This is Small ribosomal subunit protein uS13 from Hyphomonas neptunium (strain ATCC 15444).